Consider the following 452-residue polypeptide: Pup--protein ligase (452 aa).

A Mg(2+)-binding site is contributed by E9. R53 is a binding site for ATP. Y55 contacts Mg(2+). D57 serves as the catalytic Proton acceptor. A Mg(2+)-binding site is contributed by E63. Residues T66 and W419 each coordinate ATP.

This sequence belongs to the Pup ligase/Pup deamidase family. Pup-conjugating enzyme subfamily.

It carries out the reaction ATP + [prokaryotic ubiquitin-like protein]-L-glutamate + [protein]-L-lysine = ADP + phosphate + N(6)-([prokaryotic ubiquitin-like protein]-gamma-L-glutamyl)-[protein]-L-lysine.. Its pathway is protein degradation; proteasomal Pup-dependent pathway. The protein operates within protein modification; protein pupylation. Functionally, catalyzes the covalent attachment of the prokaryotic ubiquitin-like protein modifier Pup to the proteasomal substrate proteins, thereby targeting them for proteasomal degradation. This tagging system is termed pupylation. The ligation reaction involves the side-chain carboxylate of the C-terminal glutamate of Pup and the side-chain amino group of a substrate lysine. The protein is Pup--protein ligase of Mycobacterium leprae (strain Br4923).